Consider the following 131-residue polypeptide: uncharacterized protein (131 aa).

Residues 14–130 form the MSP domain; it reads FLLIYSSLEV…RRLPASFLST (117 aa).

This is an uncharacterized protein from Caenorhabditis elegans.